The sequence spans 335 residues: MWLEATTHPGLEDLLLEELSALYPGEGAEVDARKGRVRIPRAWVGEEALGLRLAHHLVLFRARLLLSREDPLGALERAALALPWPELEGAGSFRVEARREGEHPFTSPEVERRVGEALHRAYGVPVDLKRPAVRVRVDVRGEEAFLGVQLTERPLSRRFPKAALRGSLTPVLAQALLRLADARPGMRVLDPFTGSGTIALEAASTLGPTSPVYAGDLDEKRLGLAREAALASGLSWIRFLRADARHLPRFFPEVDRILANPPHGLRLGRKEGLFHLYWDFLRGALALLPPGGRVALLTLRPALLKRALPPGFALRHARVVEQGGVYPRVFVLEKL.

Residues 47 to 150 (EALGLRLAHH…GEEAFLGVQL (104 aa)) form the THUMP domain. S-adenosyl-L-methionine-binding positions include 195 to 197 (SGT), 243 to 244 (DA), and asparagine 260.

Belongs to the methyltransferase superfamily. Monomer in solution.

It localises to the cytoplasm. It catalyses the reaction guanosine(6) in tRNA + S-adenosyl-L-methionine = N(2)-methylguanosine(6) in tRNA + S-adenosyl-L-homocysteine + H(+). S-adenosyl-L-methionine-dependent methyltransferase that catalyzes the methylation of the guanosine nucleotide at position 6 (m2G6) in tRNA(Phe). This chain is tRNA (guanine(6)-N2)-methyltransferase, found in Thermus thermophilus (strain ATCC BAA-163 / DSM 7039 / HB27).